The primary structure comprises 256 residues: Triosephosphate isomerase (256 aa).

Residue 10–12 coordinates substrate; the sequence is NWK. His-96 serves as the catalytic Electrophile. Glu-168 acts as the Proton acceptor in catalysis. Residues Gly-174 and Ser-213 each coordinate substrate.

It belongs to the triosephosphate isomerase family. As to quaternary structure, homodimer.

Its subcellular location is the cytoplasm. It catalyses the reaction D-glyceraldehyde 3-phosphate = dihydroxyacetone phosphate. It functions in the pathway carbohydrate biosynthesis; gluconeogenesis. It participates in carbohydrate degradation; glycolysis; D-glyceraldehyde 3-phosphate from glycerone phosphate: step 1/1. Functionally, involved in the gluconeogenesis. Catalyzes stereospecifically the conversion of dihydroxyacetone phosphate (DHAP) to D-glyceraldehyde-3-phosphate (G3P). This is Triosephosphate isomerase from Wigglesworthia glossinidia brevipalpis.